The chain runs to 151 residues: Ribosome maturation factor RimP (151 aa).

The protein belongs to the RimP family.

The protein resides in the cytoplasm. In terms of biological role, required for maturation of 30S ribosomal subunits. The sequence is that of Ribosome maturation factor RimP from Hydrogenovibrio crunogenus (strain DSM 25203 / XCL-2) (Thiomicrospira crunogena).